The primary structure comprises 107 residues: Acetyl-CoA acetyltransferase (107 aa).

Cysteine 88 serves as the catalytic Acyl-thioester intermediate.

The protein belongs to the thiolase-like superfamily. Thiolase family. As to quaternary structure, homotetramer.

Its subcellular location is the cytoplasm. The catalysed reaction is 2 acetyl-CoA = acetoacetyl-CoA + CoA. Functionally, catalyzes the condensation of two molecules of acetyl-CoA to produce acetoacetyl-CoA. The sequence is that of Acetyl-CoA acetyltransferase (thi) from Clostridioides difficile (Peptoclostridium difficile).